Reading from the N-terminus, the 142-residue chain is 3-hydroxyacyl-[acyl-carrier-protein] dehydratase FabZ (142 aa).

Residue histidine 49 is part of the active site.

Belongs to the thioester dehydratase family. FabZ subfamily.

Its subcellular location is the cytoplasm. The catalysed reaction is a (3R)-hydroxyacyl-[ACP] = a (2E)-enoyl-[ACP] + H2O. Involved in unsaturated fatty acids biosynthesis. Catalyzes the dehydration of short chain beta-hydroxyacyl-ACPs and long chain saturated and unsaturated beta-hydroxyacyl-ACPs. In Clostridium novyi (strain NT), this protein is 3-hydroxyacyl-[acyl-carrier-protein] dehydratase FabZ.